The sequence spans 508 residues: Photosystem II CP47 reaction center protein (508 aa).

Transmembrane regions (helical) follow at residues 21 to 36 (SVHI…WAGS), 101 to 115 (IVFS…IWHW), 140 to 156 (GIHL…FGAF), 203 to 218 (IAAG…FHLS), 237 to 252 (VLSS…AFVV), and 457 to 472 (SFAL…HGAR).

This sequence belongs to the PsbB/PsbC family. PsbB subfamily. In terms of assembly, PSII is composed of 1 copy each of membrane proteins PsbA, PsbB, PsbC, PsbD, PsbE, PsbF, PsbH, PsbI, PsbJ, PsbK, PsbL, PsbM, PsbT, PsbX, PsbY, PsbZ, Psb30/Ycf12, at least 3 peripheral proteins of the oxygen-evolving complex and a large number of cofactors. It forms dimeric complexes. The cofactor is Binds multiple chlorophylls. PSII binds additional chlorophylls, carotenoids and specific lipids..

It localises to the plastid. The protein resides in the chloroplast thylakoid membrane. In terms of biological role, one of the components of the core complex of photosystem II (PSII). It binds chlorophyll and helps catalyze the primary light-induced photochemical processes of PSII. PSII is a light-driven water:plastoquinone oxidoreductase, using light energy to abstract electrons from H(2)O, generating O(2) and a proton gradient subsequently used for ATP formation. The sequence is that of Photosystem II CP47 reaction center protein from Atropa belladonna (Belladonna).